Reading from the N-terminus, the 318-residue chain is L-lactate dehydrogenase 1 (318 aa).

NAD(+) contacts are provided by residues V17, D38, K43, Y69, and 83-84 (GA). Residues Q86, R92, and 124–127 (NPVD) each bind substrate. NAD(+) is bound by residues 122–124 (ATN) and S147. Position 152 to 155 (152 to 155 (DTGR)) interacts with substrate. Beta-D-fructose 1,6-bisphosphate-binding residues include R157 and H172. H179 (proton acceptor) is an active-site residue. Position 224 is a phosphotyrosine (Y224). Substrate is bound at residue T233.

The protein belongs to the LDH/MDH superfamily. LDH family. As to quaternary structure, homotetramer.

It is found in the cytoplasm. It catalyses the reaction (S)-lactate + NAD(+) = pyruvate + NADH + H(+). The protein operates within fermentation; pyruvate fermentation to lactate; (S)-lactate from pyruvate: step 1/1. Allosterically activated by fructose 1,6-bisphosphate (FBP). In terms of biological role, catalyzes the conversion of lactate to pyruvate. The sequence is that of L-lactate dehydrogenase 1 from Peribacillus psychrosaccharolyticus (Bacillus psychrosaccharolyticus).